Consider the following 89-residue polypeptide: Small ribosomal subunit protein uS15 (89 aa).

The protein belongs to the universal ribosomal protein uS15 family. As to quaternary structure, part of the 30S ribosomal subunit. Forms a bridge to the 50S subunit in the 70S ribosome, contacting the 23S rRNA.

Its function is as follows. One of the primary rRNA binding proteins, it binds directly to 16S rRNA where it helps nucleate assembly of the platform of the 30S subunit by binding and bridging several RNA helices of the 16S rRNA. In terms of biological role, forms an intersubunit bridge (bridge B4) with the 23S rRNA of the 50S subunit in the ribosome. The sequence is that of Small ribosomal subunit protein uS15 from Rhizobium johnstonii (strain DSM 114642 / LMG 32736 / 3841) (Rhizobium leguminosarum bv. viciae).